The chain runs to 334 residues: Protein-methionine-sulfoxide reductase catalytic subunit MsrP (334 aa).

The tat-type signal signal peptide spans 1–44 (MKAVNPLTENDVTPESLFNARRRTVLKMLGMSAAALSLPGAARA). Residues Asn-88, 91–92 (YE), Cys-146, Thr-181, Asn-233, Arg-238, and 249–251 (GIK) each bind Mo-molybdopterin.

This sequence belongs to the MsrP family. In terms of assembly, heterodimer of a catalytic subunit (MsrP) and a heme-binding subunit (MsrQ). Requires Mo-molybdopterin as cofactor. Predicted to be exported by the Tat system. The position of the signal peptide cleavage has not been experimentally proven.

It localises to the periplasm. The enzyme catalyses L-methionyl-[protein] + a quinone + H2O = L-methionyl-(S)-S-oxide-[protein] + a quinol. The catalysed reaction is L-methionyl-[protein] + a quinone + H2O = L-methionyl-(R)-S-oxide-[protein] + a quinol. In terms of biological role, part of the MsrPQ system that repairs oxidized periplasmic proteins containing methionine sulfoxide residues (Met-O), using respiratory chain electrons. Thus protects these proteins from oxidative-stress damage caused by reactive species of oxygen and chlorine generated by the host defense mechanisms. MsrPQ is essential for the maintenance of envelope integrity under bleach stress, rescuing a wide series of structurally unrelated periplasmic proteins from methionine oxidation. The catalytic subunit MsrP is non-stereospecific, being able to reduce both (R-) and (S-) diastereoisomers of methionine sulfoxide. This Erwinia tasmaniensis (strain DSM 17950 / CFBP 7177 / CIP 109463 / NCPPB 4357 / Et1/99) protein is Protein-methionine-sulfoxide reductase catalytic subunit MsrP.